A 346-amino-acid polypeptide reads, in one-letter code: DNA primase small subunit PriS (346 aa).

Residues D97, D99, and D278 contribute to the active site.

Belongs to the eukaryotic-type primase small subunit family. In terms of assembly, heterodimer of a small subunit (PriS) and a large subunit (PriL). Mg(2+) is required as a cofactor. Requires Mn(2+) as cofactor.

Its function is as follows. Catalytic subunit of DNA primase, an RNA polymerase that catalyzes the synthesis of short RNA molecules used as primers for DNA polymerase during DNA replication. The small subunit contains the primase catalytic core and has DNA synthesis activity on its own. Binding to the large subunit stabilizes and modulates the activity, increasing the rate of DNA synthesis while decreasing the length of the DNA fragments, and conferring RNA synthesis capability. The DNA polymerase activity may enable DNA primase to also catalyze primer extension after primer synthesis. May also play a role in DNA repair. This Thermococcus onnurineus (strain NA1) protein is DNA primase small subunit PriS.